Consider the following 374-residue polypeptide: tRNA (guanine(26)-N(2))-dimethyltransferase (374 aa).

The Trm1 methyltransferase domain maps to 4-371 (IEIREGKASL…KEIDEIVNCI (368 aa)). S-adenosyl-L-methionine-binding residues include arginine 44, arginine 69, aspartate 87, aspartate 113, and alanine 114. Positions 244, 247, 261, and 264 each coordinate Zn(2+).

The protein belongs to the class I-like SAM-binding methyltransferase superfamily. Trm1 family.

The catalysed reaction is guanosine(26) in tRNA + 2 S-adenosyl-L-methionine = N(2)-dimethylguanosine(26) in tRNA + 2 S-adenosyl-L-homocysteine + 2 H(+). Dimethylates a single guanine residue at position 26 of a number of tRNAs using S-adenosyl-L-methionine as donor of the methyl groups. The chain is tRNA (guanine(26)-N(2))-dimethyltransferase from Sulfurisphaera tokodaii (strain DSM 16993 / JCM 10545 / NBRC 100140 / 7) (Sulfolobus tokodaii).